The sequence spans 441 residues: Ribosomal protein uS12 methylthiotransferase RimO (441 aa).

The MTTase N-terminal domain occupies 7-117; the sequence is PKISFVSLGC…VLEAVHRASP (111 aa). The [4Fe-4S] cluster site is built by C16, C52, C81, C148, C152, and C155. The Radical SAM core domain maps to 134–371; it reads LTPRHYAYLK…MARQQKISAR (238 aa). In terms of domain architecture, TRAM spans 374 to 440; the sequence is KRKVGTRQQI…EYDLHGTVAG (67 aa).

This sequence belongs to the methylthiotransferase family. RimO subfamily. [4Fe-4S] cluster serves as cofactor.

The protein localises to the cytoplasm. The catalysed reaction is L-aspartate(89)-[ribosomal protein uS12]-hydrogen + (sulfur carrier)-SH + AH2 + 2 S-adenosyl-L-methionine = 3-methylsulfanyl-L-aspartate(89)-[ribosomal protein uS12]-hydrogen + (sulfur carrier)-H + 5'-deoxyadenosine + L-methionine + A + S-adenosyl-L-homocysteine + 2 H(+). In terms of biological role, catalyzes the methylthiolation of an aspartic acid residue of ribosomal protein uS12. The chain is Ribosomal protein uS12 methylthiotransferase RimO from Bradyrhizobium sp. (strain BTAi1 / ATCC BAA-1182).